Consider the following 422-residue polypeptide: 5-hydroxytryptamine receptor 1A (422 aa).

A disordered region spans residues 1–23; it reads MDVLSPGQGNNTTSPPAPFETGG. Residues 1–38 lie on the Extracellular side of the membrane; it reads MDVLSPGQGNNTTSPPAPFETGGNTTGISDVTVSYQVI. N-linked (GlcNAc...) asparagine glycans are attached at residues Asn-10, Asn-11, and Asn-24. The chain crosses the membrane as a helical span at residues 39 to 59; it reads TSLLLGTLIFCAVLGNACVVA. The Cytoplasmic portion of the chain corresponds to 60-73; it reads AIALERSLQNVANY. The chain crosses the membrane as a helical span at residues 74–98; it reads LIGSLAVTDLMVSVLVLPMAALYQV. Topologically, residues 99 to 107 are extracellular; the sequence is LNKWTLGQV. Residues 108-132 form a helical membrane-spanning segment; that stretch reads TCDLFIALDVLCCTSSILHLCAIAL. A disulfide bridge links Cys-109 with Cys-187. Serotonin-binding residues include Asp-116 and Cys-120. Positions 133–135 match the DRY motif; important for ligand-induced conformation changes motif; sequence DRY. Over 133-152 the chain is Cytoplasmic; sequence DRYWAITDPIDYVNKRTPRR. Residues 153–174 traverse the membrane as a helical segment; that stretch reads AAALISLTWLIGFLISIPPMLG. The Extracellular portion of the chain corresponds to 175-193; it reads WRTPEDRSDPDACTISKDH. A helical transmembrane segment spans residues 194–216; sequence GYTIYSTFGAFYIPLLLMLVLYG. The Cytoplasmic portion of the chain corresponds to 217–346; it reads RIFRAARFRI…LARERKTVKT (130 aa). A disordered region spans residues 235-262; that stretch reads KTGADTRHGASPAPQPKKSVNGESGSRN. 1D-myo-inositol 4-phosphate is bound by residues Thr-314, Lys-345, Thr-346, and Gly-352. Residues 347-370 traverse the membrane as a helical segment; it reads LGIIMGTFILCWLPFFIVALVLPF. Topologically, residues 371–378 are extracellular; it reads CESSCHMP. A helical membrane pass occupies residues 379–403; the sequence is TLLGAIINWLGYSNSLLNPVIYAYF. The NPxxY motif; important for ligand-induced conformation changes and signaling motif lies at 396–400; that stretch reads NPVIY. Phe-403, Asn-404, and Lys-405 together coordinate 1D-myo-inositol 4-phosphate. Topologically, residues 404 to 422 are cytoplasmic; sequence NKDFQNAFKKIIKCKFCRQ.

It belongs to the G-protein coupled receptor 1 family. 5-hydroxytryptamine receptor subfamily. HTR1A sub-subfamily. As to quaternary structure, heterodimer; heterodimerizes with GPER1. Interacts with YIF1B. Interacts with GPR39 and GALR1. In terms of tissue distribution, detected in lymph nodes, thymus and spleen. Detected in activated T-cells, but not in resting T-cells.

It localises to the cell membrane. It is found in the cell projection. Its subcellular location is the dendrite. Its activity is regulated as follows. G-protein coupled receptor activity is regulated by lipids: phosphatidylinositol 4-phosphate increases HTR1A-mediated activity. Binding to aripiprazol drug is regulated by cholesterol, which shapes the ligand-binding pocket, determining the specificity for aripiprazol. Activated by IHCH-7179 small molecule: IHCH-7179 acts both as an agonist activator for HTR1A and as an antagonist inhibitor for HTR2A. Activated by SEP-363856 small molecule: IHCH-7179 acts both as an agonist activator for HTR1A and TAAR1. Its function is as follows. G-protein coupled receptor for 5-hydroxytryptamine (serotonin). Also functions as a receptor for various drugs and psychoactive substances. Ligand binding causes a conformation change that triggers signaling via guanine nucleotide-binding proteins (G proteins) and modulates the activity of downstream effectors, such as adenylate cyclase. HTR1A is coupled to G(i)/G(o) G alpha proteins and mediates inhibitory neurotransmission: signaling inhibits adenylate cyclase activity and activates a phosphatidylinositol-calcium second messenger system that regulates the release of Ca(2+) ions from intracellular stores. Beta-arrestin family members regulate signaling by mediating both receptor desensitization and resensitization processes. Plays a role in the regulation of 5-hydroxytryptamine release and in the regulation of dopamine and 5-hydroxytryptamine metabolism. Plays a role in the regulation of dopamine and 5-hydroxytryptamine levels in the brain, and thereby affects neural activity, mood and behavior. Plays a role in the response to anxiogenic stimuli. This is 5-hydroxytryptamine receptor 1A from Homo sapiens (Human).